Here is a 178-residue protein sequence, read N- to C-terminus: Large ribosomal subunit protein uL6 (178 aa).

The protein belongs to the universal ribosomal protein uL6 family. Part of the 50S ribosomal subunit.

In terms of biological role, this protein binds to the 23S rRNA, and is important in its secondary structure. It is located near the subunit interface in the base of the L7/L12 stalk, and near the tRNA binding site of the peptidyltransferase center. The chain is Large ribosomal subunit protein uL6 from Streptococcus pneumoniae (strain 70585).